The following is a 379-amino-acid chain: Mannitol-1-phosphate 5-dehydrogenase (379 aa).

3-14 (ALHFGAGNIGRG) serves as a coordination point for NAD(+).

The protein belongs to the mannitol dehydrogenase family.

It carries out the reaction D-mannitol 1-phosphate + NAD(+) = beta-D-fructose 6-phosphate + NADH + H(+). In Actinobacillus pleuropneumoniae serotype 5b (strain L20), this protein is Mannitol-1-phosphate 5-dehydrogenase.